The chain runs to 98 residues: NADH-ubiquinone oxidoreductase chain 4L (98 aa).

Transmembrane regions (helical) follow at residues 1 to 21, 29 to 49, and 61 to 81; these read MPPIYMNIILAFTLSLMGMLV, SLLCLEGMMLSLFILGTTMAL, and IVLLVFAACEAAVGLSLLVMV.

This sequence belongs to the complex I subunit 4L family. As to quaternary structure, core subunit of respiratory chain NADH dehydrogenase (Complex I) which is composed of 45 different subunits.

Its subcellular location is the mitochondrion inner membrane. It carries out the reaction a ubiquinone + NADH + 5 H(+)(in) = a ubiquinol + NAD(+) + 4 H(+)(out). Its function is as follows. Core subunit of the mitochondrial membrane respiratory chain NADH dehydrogenase (Complex I) which catalyzes electron transfer from NADH through the respiratory chain, using ubiquinone as an electron acceptor. Part of the enzyme membrane arm which is embedded in the lipid bilayer and involved in proton translocation. The chain is NADH-ubiquinone oxidoreductase chain 4L (MT-ND4L) from Orycteropus afer (Aardvark).